Consider the following 398-residue polypeptide: Abhydrolase domain-containing protein 2 (398 aa).

Over 1 to 4 (MSTA) the chain is Cytoplasmic. Residues 5-22 (FLTLIAVIVCILFRILNV) form a helical; Signal-anchor for type II membrane protein membrane-spanning segment. Topologically, residues 23–398 (HSQPLKPSVW…MMHEVGKVAP (376 aa)) are extracellular. One can recognise an AB hydrolase-1 domain in the interval 113–365 (VAICPGIANS…HGGHLGFYEG (253 aa)). Active-site charge relay system residues include S192, D328, and H359.

This sequence belongs to the AB hydrolase superfamily. AB hydrolase 4 family.

It localises to the membrane. In Drosophila melanogaster (Fruit fly), this protein is Abhydrolase domain-containing protein 2 (Hydr2).